The chain runs to 1090 residues: Exoglucanase B (1090 aa).

Residues 1 to 33 (MSSTTRRRSAWVAAATVGVSSFLAVAGITPAIA) form the signal peptide. The propeptide occupies 34–53 (AAGAGQPATVTVPAASPVRA). Residues 54–699 (AVDGEYAQRF…RLFDDGTTTP (646 aa)) form a catalytic region. The active-site Nucleophile is Asp513. Fibronectin type-III domains follow at residues 706–791 (VPTG…TKAT), 797–887 (APSV…TKSD), and 897–984 (VPAG…TKTP). Positions 983-1090 (TPQTGGSCSV…SFTLNGASCT (108 aa)) constitute a CBM2 domain. Cys990 and Cys1089 form a disulfide bridge. The interval 1069–1090 (NGSHTGQNPNPASFTLNGASCT) is disordered. The span at 1070–1090 (GSHTGQNPNPASFTLNGASCT) shows a compositional bias: polar residues.

It belongs to the glycosyl hydrolase 48 (cellulase L) family.

It catalyses the reaction Hydrolysis of (1-&gt;4)-beta-D-glucosidic linkages in cellulose and cellotetraose, releasing cellobiose from the non-reducing ends of the chains.. Its function is as follows. Hydrolyzes cellohexaose to a mixture of cellotetraose, cellotriose and cellobiose, with only a trace of glucose. It hydrolyzed cellopentaose to cellotriose and cellobiose, and cellotetraose to cellobiose, but it did not hydrolyze cellotriose. Also has weak endoglucanase activity. Hydrolyzes glucosidic bonds with inversion of anomeric configuration. This Cellulomonas fimi (strain ATCC 484 / DSM 20113 / JCM 1341 / CCUG 24087 / LMG 16345 / NBRC 15513 / NCIMB 8980 / NCTC 7547 / NRS-133) protein is Exoglucanase B (cbhB).